The sequence spans 1163 residues: GTPase-activating protein (1163 aa).

C2 domains are found at residues 26–148 (PSSN…DHWF) and 261–419 (TTST…SAWY). Residues 520 to 737 (ERIAPIIKAL…DAVKHFLEVI (218 aa)) enclose the Ras-GAP domain. The region spanning 762–860 (LKEGLMTKYP…WFDLLHKICL (99 aa)) is the PH domain. Residues 862–898 (NSIRMQYFHPSAFVSGFYSCCGRSDENSPGCKKVLDK) form a Btk-type zinc finger. H870, C881, C882, and C892 together coordinate Zn(2+). Disordered regions lie at residues 1026-1051 (LNQQ…LQQF) and 1091-1163 (PFHQ…PPIY). The span at 1091 to 1157 (PFHQQQQQHH…APPSTTSSSQ (67 aa)) shows a compositional bias: low complexity.

As to quaternary structure, interacts with sty. As to expression, in third instar larvae eye imaginal disk, expressed in cells posterior to the morphogenetic furrow, in all photoreceptor and cone cell precursors as well as in still uncommitted cells.

In terms of biological role, inhibitory regulator of the Ras-cyclic AMP pathway. May function as a negative regulator of Ras85D/Ras1 in the sev signaling pathway. Acts cell autonomously in cone cell precursors as a negative regulator of R7 photoreceptor cell determination. This Drosophila melanogaster (Fruit fly) protein is GTPase-activating protein (RasGAP1).